The following is a 715-amino-acid chain: Fatty acid oxidation complex subunit alpha (715 aa).

Positions 1–190 (MTTTSAFMLS…KAGLVDDVVP (190 aa)) are enoyl-CoA hydratase. Residues 306–714 (GPLNSVGILG…FWTNGETDQG (409 aa)) form a 3-hydroxyacyl-CoA dehydrogenase region.

This sequence in the N-terminal section; belongs to the enoyl-CoA hydratase/isomerase family. It in the central section; belongs to the 3-hydroxyacyl-CoA dehydrogenase family. As to quaternary structure, heterotetramer of two alpha chains (FadJ) and two beta chains (FadI).

It localises to the cytoplasm. The enzyme catalyses a (3S)-3-hydroxyacyl-CoA = a (2E)-enoyl-CoA + H2O. It catalyses the reaction a 4-saturated-(3S)-3-hydroxyacyl-CoA = a (3E)-enoyl-CoA + H2O. It carries out the reaction a (3S)-3-hydroxyacyl-CoA + NAD(+) = a 3-oxoacyl-CoA + NADH + H(+). The catalysed reaction is (3S)-3-hydroxybutanoyl-CoA = (3R)-3-hydroxybutanoyl-CoA. It participates in lipid metabolism; fatty acid beta-oxidation. Functionally, catalyzes the formation of a hydroxyacyl-CoA by addition of water on enoyl-CoA. Also exhibits 3-hydroxyacyl-CoA epimerase and 3-hydroxyacyl-CoA dehydrogenase activities. The polypeptide is Fatty acid oxidation complex subunit alpha (Salmonella typhi).